A 330-amino-acid polypeptide reads, in one-letter code: Aspartate--ammonia ligase (330 aa).

This sequence belongs to the class-II aminoacyl-tRNA synthetase family. AsnA subfamily.

It localises to the cytoplasm. The catalysed reaction is L-aspartate + NH4(+) + ATP = L-asparagine + AMP + diphosphate + H(+). The protein operates within amino-acid biosynthesis; L-asparagine biosynthesis; L-asparagine from L-aspartate (ammonia route): step 1/1. In Escherichia fergusonii (strain ATCC 35469 / DSM 13698 / CCUG 18766 / IAM 14443 / JCM 21226 / LMG 7866 / NBRC 102419 / NCTC 12128 / CDC 0568-73), this protein is Aspartate--ammonia ligase.